The sequence spans 279 residues: Lacto-N-neotetraose biosynthesis glycosyltransferase LgtB (279 aa).

Belongs to the glycosyltransferase 25 family.

Its pathway is glycan metabolism; lacto-N-neotetraose biosynthesis. It participates in bacterial outer membrane biogenesis; lipooligosaccharide biosynthesis. Adds the second galactose to the lacto-N-tetraose chain in lipooligosaccharide (LOS). The protein is Lacto-N-neotetraose biosynthesis glycosyltransferase LgtB (lgtB) of Neisseria gonorrhoeae.